The sequence spans 87 residues: Small ribosomal subunit protein uS15c (87 aa).

The protein belongs to the universal ribosomal protein uS15 family. As to quaternary structure, part of the 30S ribosomal subunit.

The protein resides in the plastid. It is found in the chloroplast. This is Small ribosomal subunit protein uS15c (rps15) from Oenothera argillicola (Appalachian evening primrose).